We begin with the raw amino-acid sequence, 405 residues long: Arginine deiminase (405 aa).

Residue cysteine 395 is the Amidino-cysteine intermediate of the active site.

It belongs to the arginine deiminase family.

The protein localises to the cytoplasm. It carries out the reaction L-arginine + H2O = L-citrulline + NH4(+). Its pathway is amino-acid degradation; L-arginine degradation via ADI pathway; carbamoyl phosphate from L-arginine: step 1/2. The chain is Arginine deiminase from Rhodococcus jostii (strain RHA1).